The following is a 304-amino-acid chain: MTNSCDRPLITPLEPPNASFIHISVLSQETIAGLNIIPGGHYLDATVGSGGHSRLILATFPDVRITAIDRDSQAIAAAASNLAELGSERLKFWQGNFADYPGKIAEFSGIIADLGVSSPQFDFPERGFSFRHEGALDMRMDQTQSLTAGEIINQWSETALADLFYQYGEERRSRSMAKHIVQQRPFKTTTQLAEAIAQTVPPKYRYGRIHPATRVFQALRIAVNEELSSLERFLDQAPQWLQPGGRIGIISFHSLEDRIVKYRFRDSSWLTVMTKKPIIPQREEQLKNPRSRSAKLRLAERHLV.

Residues 50-52 (GGH), aspartate 69, phenylalanine 97, aspartate 113, and glutamine 120 each bind S-adenosyl-L-methionine.

This sequence belongs to the methyltransferase superfamily. RsmH family.

Its subcellular location is the cytoplasm. It carries out the reaction cytidine(1402) in 16S rRNA + S-adenosyl-L-methionine = N(4)-methylcytidine(1402) in 16S rRNA + S-adenosyl-L-homocysteine + H(+). In terms of biological role, specifically methylates the N4 position of cytidine in position 1402 (C1402) of 16S rRNA. In Rippkaea orientalis (strain PCC 8801 / RF-1) (Cyanothece sp. (strain PCC 8801)), this protein is Ribosomal RNA small subunit methyltransferase H.